Here is a 353-residue protein sequence, read N- to C-terminus: UPF0283 membrane protein YcjF (353 aa).

Transmembrane regions (helical) follow at residues 70–90, 100–120, and 213–233; these read MVMGGLALFGASVVGQGVQWT, VALGGCAAGALIIGAGVGSVV, and ESTLMIAVSPLALVDMAFIAW.

This sequence belongs to the UPF0283 family.

It localises to the cell inner membrane. This Escherichia fergusonii (strain ATCC 35469 / DSM 13698 / CCUG 18766 / IAM 14443 / JCM 21226 / LMG 7866 / NBRC 102419 / NCTC 12128 / CDC 0568-73) protein is UPF0283 membrane protein YcjF.